Reading from the N-terminus, the 140-residue chain is ATP synthase epsilon chain (140 aa).

This sequence belongs to the ATPase epsilon chain family. In terms of assembly, F-type ATPases have 2 components, CF(1) - the catalytic core - and CF(0) - the membrane proton channel. CF(1) has five subunits: alpha(3), beta(3), gamma(1), delta(1), epsilon(1). CF(0) has three main subunits: a, b and c.

The protein localises to the cell membrane. Functionally, produces ATP from ADP in the presence of a proton gradient across the membrane. The protein is ATP synthase epsilon chain (atpC) of Enterococcus hirae (strain ATCC 9790 / DSM 20160 / JCM 8729 / LMG 6399 / NBRC 3181 / NCIMB 6459 / NCDO 1258 / NCTC 12367 / WDCM 00089 / R).